We begin with the raw amino-acid sequence, 274 residues long: Bis(5'-nucleosyl)-tetraphosphatase, symmetrical (274 aa).

It belongs to the Ap4A hydrolase family.

The enzyme catalyses P(1),P(4)-bis(5'-adenosyl) tetraphosphate + H2O = 2 ADP + 2 H(+). Hydrolyzes diadenosine 5',5'''-P1,P4-tetraphosphate to yield ADP. This Shewanella sp. (strain MR-4) protein is Bis(5'-nucleosyl)-tetraphosphatase, symmetrical.